The chain runs to 401 residues: NALCN channel auxiliary factor 2 (401 aa).

Residues 42–62 traverse the membrane as a helical segment; that stretch reads LASLLFFTALLSDHLWLCAGG. 4 N-linked (GlcNAc...) asparagine glycosylation sites follow: Asn-77, Asn-97, Asn-153, and Asn-178. Residues 362 to 382 form a helical membrane-spanning segment; sequence LCVLVLFLLHTFISITTLQHC.

It belongs to the NALF family.

The protein resides in the membrane. Functionally, probable component of the NALCN channel complex, a channel that regulates the resting membrane potential and controls neuronal excitability. The protein is NALCN channel auxiliary factor 2 (nalf2) of Danio rerio (Zebrafish).